We begin with the raw amino-acid sequence, 71 residues long: Large ribosomal subunit protein uL29 (71 aa).

This sequence belongs to the universal ribosomal protein uL29 family.

This Halobacterium salinarum (strain ATCC 700922 / JCM 11081 / NRC-1) (Halobacterium halobium) protein is Large ribosomal subunit protein uL29 (rpl29).